Reading from the N-terminus, the 140-residue chain is Cytochrome B5 isoform D (140 aa).

The region spanning 5–81 (GKVFTLSEVS…LDEYYVGDID (77 aa)) is the Cytochrome b5 heme-binding domain. Heme-binding residues include histidine 40 and histidine 64. Residues 109 to 129 (FVIKLLQFLVPLLILGLAFGI) form a helical membrane-spanning segment.

The protein belongs to the cytochrome b5 family. In terms of assembly, interacts with CER1, BI-1, FAH1 and FAH2. Expressed in roots, stems, leaves, flowers and siliques.

The protein localises to the endoplasmic reticulum membrane. Membrane bound hemoprotein which function as an electron carrier for several membrane bound oxygenases, including fatty acid desaturases. In Arabidopsis thaliana (Mouse-ear cress), this protein is Cytochrome B5 isoform D.